The primary structure comprises 147 residues: Ubiquitin-conjugating enzyme E2-17 kDa (147 aa).

The UBC core domain occupies 1–147; that stretch reads MALKRINKEL…AREWTRKYAM (147 aa). Cys-85 (glycyl thioester intermediate) is an active-site residue.

Belongs to the ubiquitin-conjugating enzyme family.

It carries out the reaction S-ubiquitinyl-[E1 ubiquitin-activating enzyme]-L-cysteine + [E2 ubiquitin-conjugating enzyme]-L-cysteine = [E1 ubiquitin-activating enzyme]-L-cysteine + S-ubiquitinyl-[E2 ubiquitin-conjugating enzyme]-L-cysteine.. It participates in protein modification; protein ubiquitination. Its function is as follows. Catalyzes the covalent attachment of ubiquitin to other proteins. Mediates the selective degradation of short-lived and abnormal proteins. Required for proper telomere behavior during cell divisions and possibly for ubiquitination of proteins involved in postmeiotic stages of spermatogenesis. Deletion mutations are lethal in homozygotes. The protein is Ubiquitin-conjugating enzyme E2-17 kDa (eff) of Drosophila melanogaster (Fruit fly).